Consider the following 100-residue polypeptide: Glutamyl-tRNA(Gln) amidotransferase subunit C (100 aa).

It belongs to the GatC family. In terms of assembly, heterotrimer of A, B and C subunits.

It carries out the reaction L-glutamyl-tRNA(Gln) + L-glutamine + ATP + H2O = L-glutaminyl-tRNA(Gln) + L-glutamate + ADP + phosphate + H(+). The catalysed reaction is L-aspartyl-tRNA(Asn) + L-glutamine + ATP + H2O = L-asparaginyl-tRNA(Asn) + L-glutamate + ADP + phosphate + 2 H(+). Functionally, allows the formation of correctly charged Asn-tRNA(Asn) or Gln-tRNA(Gln) through the transamidation of misacylated Asp-tRNA(Asn) or Glu-tRNA(Gln) in organisms which lack either or both of asparaginyl-tRNA or glutaminyl-tRNA synthetases. The reaction takes place in the presence of glutamine and ATP through an activated phospho-Asp-tRNA(Asn) or phospho-Glu-tRNA(Gln). This chain is Glutamyl-tRNA(Gln) amidotransferase subunit C, found in Rickettsia conorii (strain ATCC VR-613 / Malish 7).